Here is a 135-residue protein sequence, read N- to C-terminus: Large ribosomal subunit protein uL16c (135 aa).

It belongs to the universal ribosomal protein uL16 family. In terms of assembly, part of the 50S ribosomal subunit.

It is found in the plastid. The protein localises to the chloroplast. This is Large ribosomal subunit protein uL16c from Gossypium barbadense (Sea Island cotton).